A 192-amino-acid chain; its full sequence is Large ribosomal subunit protein uL6 (192 aa).

It belongs to the universal ribosomal protein uL6 family. In terms of assembly, part of the 50S ribosomal subunit.

Functionally, this protein binds to the 23S rRNA, and is important in its secondary structure. It is located near the subunit interface in the base of the L7/L12 stalk, and near the tRNA binding site of the peptidyltransferase center. In Nanoarchaeum equitans (strain Kin4-M), this protein is Large ribosomal subunit protein uL6.